The chain runs to 339 residues: Anthranilate phosphoribosyltransferase (339 aa).

5-phospho-alpha-D-ribose 1-diphosphate is bound by residues G81, 84-85 (GD), T89, 91-94 (NVST), 109-117 (KHGNRSVSS), and S121. G81 provides a ligand contact to anthranilate. Residue S93 coordinates Mg(2+). N112 serves as a coordination point for anthranilate. R167 provides a ligand contact to anthranilate. Residues D226 and E227 each coordinate Mg(2+).

This sequence belongs to the anthranilate phosphoribosyltransferase family. In terms of assembly, homodimer. The cofactor is Mg(2+).

The catalysed reaction is N-(5-phospho-beta-D-ribosyl)anthranilate + diphosphate = 5-phospho-alpha-D-ribose 1-diphosphate + anthranilate. It participates in amino-acid biosynthesis; L-tryptophan biosynthesis; L-tryptophan from chorismate: step 2/5. Functionally, catalyzes the transfer of the phosphoribosyl group of 5-phosphorylribose-1-pyrophosphate (PRPP) to anthranilate to yield N-(5'-phosphoribosyl)-anthranilate (PRA). The polypeptide is Anthranilate phosphoribosyltransferase (Persephonella marina (strain DSM 14350 / EX-H1)).